The primary structure comprises 381 residues: L-lactate dehydrogenase (381 aa).

An FMN hydroxy acid dehydrogenase domain is found at 1–380; it reads MIISASTDYR…TRDSLVRELG (380 aa). A substrate-binding site is contributed by Tyr24. Ser106 and Gln127 together coordinate FMN. Residue Tyr129 participates in substrate binding. Thr155 serves as a coordination point for FMN. Arg164 serves as a coordination point for substrate. Lys251 is a binding site for FMN. His275 acts as the Proton acceptor in catalysis. Residue Arg278 coordinates substrate. 306-330 lines the FMN pocket; it reads DSGIRSGLDVVRMIALGADTVLIGR.

This sequence belongs to the FMN-dependent alpha-hydroxy acid dehydrogenase family. As to quaternary structure, homotetramer. It depends on FMN as a cofactor.

It is found in the cell inner membrane. The enzyme catalyses (S)-lactate + A = pyruvate + AH2. Catalyzes the conversion of L-lactate to pyruvate. Is coupled to the respiratory chain. This is L-lactate dehydrogenase from Pseudomonas entomophila (strain L48).